A 590-amino-acid polypeptide reads, in one-letter code: Glutamine--tRNA ligase (590 aa).

The short motif at 55–65 is the 'HIGH' region element; the sequence is PEPNGYLHIGH. Residues 56 to 58 and 62 to 68 each bind ATP; these read EPN and HIGHAKS. Residues Asp93 and Tyr238 each contribute to the L-glutamine site. Residues Thr257 and 292 to 293 each bind ATP; that span reads RL. Positions 299–303 match the 'KMSKS' region motif; the sequence is ITSKR.

This sequence belongs to the class-I aminoacyl-tRNA synthetase family. As to quaternary structure, monomer.

It is found in the cytoplasm. It catalyses the reaction tRNA(Gln) + L-glutamine + ATP = L-glutaminyl-tRNA(Gln) + AMP + diphosphate. This is Glutamine--tRNA ligase from Polynucleobacter necessarius subsp. necessarius (strain STIR1).